The primary structure comprises 100 residues: A-type ATP synthase subunit F (100 aa).

The protein belongs to the V-ATPase F subunit family. As to quaternary structure, has multiple subunits with at least A(3), B(3), C, D, E, F, H, I and proteolipid K(x).

Its subcellular location is the cell membrane. Its function is as follows. Component of the A-type ATP synthase that produces ATP from ADP in the presence of a proton gradient across the membrane. The protein is A-type ATP synthase subunit F of Methanoregula boonei (strain DSM 21154 / JCM 14090 / 6A8).